Reading from the N-terminus, the 692-residue chain is MAREFSLEKTRNIGIMAHIDAGKTTTTERILFYTGRVHKIGEVHEGAATMDWMEQEQERGITITSAATTAQWKGHRINIIDTPGHVDFTVEVERSLRVLDGAITVLDAQSGVEPQTETVWRQATTYGVPRIVFVNKMDKIGADFLYSVKTLHDRLQANAHPVQLPIGAEDQFSGIIDLVEMCAYHYHDELGKNIERIDIPEEYRDMAEEYHNKLIEAVAELDEELMMKYLEGEEITTEELKAAIRKATISVEFFPVFCGSAFKNKGVQLLLDGVVDYLPSPVDIPAIRGVVPDTEEEVTREASDDAPFAALAFKIMTDPYVGKLTFIRVYSGTLDSGSYVMNTTKGKRERIGRLLQMHANHRQEISKVYAGDIAAAVGLKDTTTGDTLCDEKHPVILESMQFPEPVISVAIEPKSKADQDKMSQALQKLQEEDPTFRAHTDPETGQTIISGMGELHLDIIVDRMRREFKVEANVGAPQVAYRETFRKSAQVEGKFIRQSGGRGQYGHVWIEFSPNERGKGFEFENAIVGGVVPKEYVPAVQAGLEEAMQNGVLAGYPVVDIKAKLFDGSYHDVDSSEMAFKIAASLALKNAATKCDPVLLEPIMKVEVVIPEEYLGDIMGDITSRRGRIEGMEARGNAQVVRAMVPMAEMFGYATSLRSNTQGRGTFSMVFDHYEEVPKNIADEIIKKNKGE.

The region spanning 8–282 is the tr-type G domain; the sequence is EKTRNIGIMA…GVVDYLPSPV (275 aa). Residues 17–24, 81–85, and 135–138 contribute to the GTP site; these read AHIDAGKT, DTPGH, and NKMD.

The protein belongs to the TRAFAC class translation factor GTPase superfamily. Classic translation factor GTPase family. EF-G/EF-2 subfamily.

The protein localises to the cytoplasm. Functionally, catalyzes the GTP-dependent ribosomal translocation step during translation elongation. During this step, the ribosome changes from the pre-translocational (PRE) to the post-translocational (POST) state as the newly formed A-site-bound peptidyl-tRNA and P-site-bound deacylated tRNA move to the P and E sites, respectively. Catalyzes the coordinated movement of the two tRNA molecules, the mRNA and conformational changes in the ribosome. The protein is Elongation factor G of Geobacillus kaustophilus (strain HTA426).